The following is a 148-amino-acid chain: Putative nickel-responsive regulator (148 aa).

Ni(2+)-binding residues include His-88, His-99, His-101, and Cys-107.

It belongs to the transcriptional regulatory CopG/NikR family. The cofactor is Ni(2+).

Transcriptional regulator. This Helicobacter pylori (strain G27) protein is Putative nickel-responsive regulator.